The primary structure comprises 160 residues: 17.9 kDa class II heat shock protein (160 aa).

Residues Asp44–Ala160 form the sHSP domain.

It belongs to the small heat shock protein (HSP20) family.

It localises to the cytoplasm. The chain is 17.9 kDa class II heat shock protein (HSP17.9) from Helianthus annuus (Common sunflower).